Reading from the N-terminus, the 306-residue chain is Protein FdhE homolog (306 aa).

The protein belongs to the FdhE family.

Its subcellular location is the cytoplasm. Its function is as follows. Necessary for formate dehydrogenase activity. The protein is Protein FdhE homolog of Glaesserella parasuis serovar 5 (strain SH0165) (Haemophilus parasuis).